The primary structure comprises 89 residues: Aminoacyl carrier protein 2 (89 aa).

The 79-residue stretch at 6–84 (INVQNRVLSV…AMERMILNQL (79 aa)) folds into the Carrier domain. An O-(pantetheine 4'-phosphoryl)serine modification is found at serine 42.

4'-phosphopantetheine is transferred from CoA to a specific serine of the apo-form of this carrier protein.

Functionally, aminoacyl carrier protein. Can be charged with L-glycine via the formation of a thioester bond between the amino acid and the 4'-phosphopantetheinyl prosthetic group, catalyzed by the bll6282 ligase. This chain is Aminoacyl carrier protein 2, found in Bradyrhizobium diazoefficiens (strain JCM 10833 / BCRC 13528 / IAM 13628 / NBRC 14792 / USDA 110).